The primary structure comprises 83 residues: Large ribosomal subunit protein bL27 (83 aa).

This sequence belongs to the bacterial ribosomal protein bL27 family.

This Treponema denticola (strain ATCC 35405 / DSM 14222 / CIP 103919 / JCM 8153 / KCTC 15104) protein is Large ribosomal subunit protein bL27.